A 1100-amino-acid polypeptide reads, in one-letter code: Tyrosine-protein kinase JAK3 (1100 aa).

A cytokine/interferon/growth hormone receptors region spans residues 1-223; sequence MAPPSEETPL…RRTVVQALRR (223 aa). Serine 17 is modified (phosphoserine). An FERM domain is found at 24–353; it reads GALHVLLPPR…GYFRLICDSR (330 aa). The 101-residue stretch at 372-472 folds into the SH2; atypical domain; the sequence is LCHGPITLDF…GTALNLTSCC (101 aa). The region spanning 517–777 is the Protein kinase 1 domain; that stretch reads LEWHENLGHG…AILRDLNGLI (261 aa). Tyrosine 781 carries the phosphotyrosine; by autocatalysis modification. The region spanning 818-1091 is the Protein kinase 2 domain; sequence LKYISLLGKG…PAFDTLSPQL (274 aa). ATP contacts are provided by residues 824–832 and lysine 851; that span reads LGKGNFGSV. 2 positions are modified to phosphotyrosine: tyrosine 900 and tyrosine 935. Aspartate 945 (proton acceptor) is an active-site residue. Phosphotyrosine; by autocatalysis is present on residues tyrosine 976 and tyrosine 977.

The protein belongs to the protein kinase superfamily. Tyr protein kinase family. JAK subfamily. As to quaternary structure, interacts with STAM2 and MYO18A. Interacts with SHB. Interacts with CD69. Post-translationally, autophosphorylated, leading to regulate its activity. IL2 promotes phosphorylation on tyrosine residues, including autophosphorylation on Tyr-781. Dephosphorylation of Tyr-976 and Tyr-977 by PTPN2 negatively regulates cytokine-mediated signaling. In terms of tissue distribution, in contrast with the ubiquitous expression of the other JAKs, JAK3 is predominantly expressed in hematopoietic tissues.

It is found in the endomembrane system. It localises to the cytoplasm. It catalyses the reaction L-tyrosyl-[protein] + ATP = O-phospho-L-tyrosyl-[protein] + ADP + H(+). In terms of biological role, non-receptor tyrosine kinase involved in various processes such as cell growth, development, or differentiation. Mediates essential signaling events in both innate and adaptive immunity and plays a crucial role in hematopoiesis during T-cells development. In the cytoplasm, plays a pivotal role in signal transduction via its association with type I receptors sharing the common subunit gamma such as IL2R, IL4R, IL7R, IL9R, IL15R and IL21R. Following ligand binding to cell surface receptors, phosphorylates specific tyrosine residues on the cytoplasmic tails of the receptor, creating docking sites for STATs proteins. Subsequently, phosphorylates the STATs proteins once they are recruited to the receptor. Phosphorylated STATs then form homodimer or heterodimers and translocate to the nucleus to activate gene transcription. For example, upon IL2R activation by IL2, JAK1 and JAK3 molecules bind to IL2R beta (IL2RB) and gamma chain (IL2RG) subunits inducing the tyrosine phosphorylation of both receptor subunits on their cytoplasmic domain. Then, STAT5A and STAT5B are recruited, phosphorylated and activated by JAK1 and JAK3. Once activated, dimerized STAT5 translocates to the nucleus and promotes the transcription of specific target genes in a cytokine-specific fashion. The protein is Tyrosine-protein kinase JAK3 of Rattus norvegicus (Rat).